We begin with the raw amino-acid sequence, 200 residues long: GTP cyclohydrolase-2 (200 aa).

50–54 (RIHSE) provides a ligand contact to GTP. Residues Cys55, Cys66, and Cys68 each contribute to the Zn(2+) site. GTP-binding positions include Gln71, 93-95 (EGR), and Thr115. The active-site Proton acceptor is the Asp127. Arg129 (nucleophile) is an active-site residue. Residues Thr150 and Lys155 each coordinate GTP.

Belongs to the GTP cyclohydrolase II family. Zn(2+) serves as cofactor.

It catalyses the reaction GTP + 4 H2O = 2,5-diamino-6-hydroxy-4-(5-phosphoribosylamino)-pyrimidine + formate + 2 phosphate + 3 H(+). Its pathway is cofactor biosynthesis; riboflavin biosynthesis; 5-amino-6-(D-ribitylamino)uracil from GTP: step 1/4. Functionally, catalyzes the conversion of GTP to 2,5-diamino-6-ribosylamino-4(3H)-pyrimidinone 5'-phosphate (DARP), formate and pyrophosphate. This is GTP cyclohydrolase-2 from Acinetobacter baylyi (strain ATCC 33305 / BD413 / ADP1).